The following is a 336-amino-acid chain: Ketoreductase adrE (336 aa).

Y171 contributes to the NADP(+) binding site.

The protein belongs to the NAD(P)-dependent epimerase/dehydratase family. Dihydroflavonol-4-reductase subfamily.

It participates in secondary metabolite biosynthesis; terpenoid biosynthesis. Ketoreductase; part of the gene cluster that mediates the biosynthesis of andrastins, meroterpenoid compounds that exhibit inhibitory activity against ras farnesyltransferase, suggesting that they could be promising leads for antitumor agents. The first step of the pathway is the synthesis of 3,5-dimethylorsellinic acid (DMOA) by the polyketide synthase adrD via condensation of one acetyl-CoA starter unit with 3 malonyl-CoA units and 2 methylations. DMAO is then converted to farnesyl-DMAO by the prenyltransferase adrG. The methyltransferase adrK catalyzes the methylation of the carboxyl group of farnesyl-DMAO to farnesyl-DMAO methyl ester which is further converted to epoxyfarnesyl-DMAO methyl ester by the FAD-dependent monooxygenase adrH. The terpene cyclase adrI then catalyzes the carbon skeletal rearrangement to generate the andrastin E, the first compound in the pathway having the andrastin scaffold, with the tetracyclic ring system. The post-cyclization tailoring enzymes adrF, adrE, adrJ, and adrA, are involved in the conversion of andrastin E into andrastin A. The short chain dehydrogenase adrF is responsible for the oxidation of the C-3 a hydroxyl group of andrastin E to yield the corresponding ketone, andrastin D. The ketoreductase adrE stereoselectively reduces the carbonyl moiety to reverse the stereochemistry of the C-3 position to yield andrastin F. The acetyltransferase adrJ is the acetyltransferase that attaches the acetyl group to the C-3 hydroxyl group of andrastin F to yield andrastin C. Finally, the cytochrome P450 monooxygenase adrA catalyzes two sequential oxidation reactions of the C-23 methyl group, to generate the corresponding alcohol andrastin B, and aldehyde andrastin A. This is Ketoreductase adrE from Penicillium rubens (strain ATCC 28089 / DSM 1075 / NRRL 1951 / Wisconsin 54-1255) (Penicillium chrysogenum).